A 232-amino-acid chain; its full sequence is Ornithine carbamoyltransferase (232 aa).

Carbamoyl phosphate is bound by residues Gln15, Arg39, and 66 to 69; that span reads HPTQ. L-ornithine contacts are provided by residues Asn99, Asp163, and 167-168; that span reads SM. Carbamoyl phosphate contacts are provided by residues 204–207 and Thr232; that span reads HCLP.

It belongs to the aspartate/ornithine carbamoyltransferase superfamily. OTCase family.

It localises to the cytoplasm. It carries out the reaction carbamoyl phosphate + L-ornithine = L-citrulline + phosphate + H(+). It functions in the pathway amino-acid biosynthesis; L-arginine biosynthesis; L-arginine from L-ornithine and carbamoyl phosphate: step 1/3. Functionally, reversibly catalyzes the transfer of the carbamoyl group from carbamoyl phosphate (CP) to the N(epsilon) atom of ornithine (ORN) to produce L-citrulline. This chain is Ornithine carbamoyltransferase (argF), found in Neisseria sicca.